The primary structure comprises 177 residues: Translation initiation factor IF-3 (177 aa).

It belongs to the IF-3 family. In terms of assembly, monomer.

It localises to the cytoplasm. In terms of biological role, IF-3 binds to the 30S ribosomal subunit and shifts the equilibrium between 70S ribosomes and their 50S and 30S subunits in favor of the free subunits, thus enhancing the availability of 30S subunits on which protein synthesis initiation begins. The sequence is that of Translation initiation factor IF-3 from Synechocystis sp. (strain ATCC 27184 / PCC 6803 / Kazusa).